A 524-amino-acid chain; its full sequence is Chromosomal replication initiator protein DnaA (524 aa).

A domain I, interacts with DnaA modulators region spans residues 1–85; the sequence is MSQNSSSLLE…TRVLSLRMGR (85 aa). The domain II stretch occupies residues 85–182; that stretch reads RSFSLAVSVE…TPAHNPNREV (98 aa). The interval 95-183 is disordered; the sequence is PEQEIPETPA…PAHNPNREVS (89 aa). Pro residues predominate over residues 148-158; it reads APEPHPAPIAD. The segment at 183 to 399 is domain III, AAA+ region; it reads SLNPKYTFES…GALIRVSAYS (217 aa). Residues G227, G229, K230, and T231 each coordinate ATP. The interval 400–524 is domain IV, binds dsDNA; the sequence is SLINQPIDKE…TQLIKSRGRN (125 aa).

It belongs to the DnaA family. Oligomerizes as a right-handed, spiral filament on DNA at oriC.

The protein resides in the cytoplasm. In terms of biological role, plays an essential role in the initiation and regulation of chromosomal replication. ATP-DnaA binds to the origin of replication (oriC) to initiate formation of the DNA replication initiation complex once per cell cycle. Binds the DnaA box (a 9 base pair repeat at the origin) and separates the double-stranded (ds)DNA. Forms a right-handed helical filament on oriC DNA; dsDNA binds to the exterior of the filament while single-stranded (ss)DNA is stabiized in the filament's interior. The ATP-DnaA-oriC complex binds and stabilizes one strand of the AT-rich DNA unwinding element (DUE), permitting loading of DNA polymerase. After initiation quickly degrades to an ADP-DnaA complex that is not apt for DNA replication. Binds acidic phospholipids. The protein is Chromosomal replication initiator protein DnaA of Corynebacterium glutamicum (strain ATCC 13032 / DSM 20300 / JCM 1318 / BCRC 11384 / CCUG 27702 / LMG 3730 / NBRC 12168 / NCIMB 10025 / NRRL B-2784 / 534).